A 133-amino-acid polypeptide reads, in one-letter code: uncharacterized protein (133 aa).

A helical membrane pass occupies residues 11–31 (YFLISVFLIFIVSGITYFYST).

It localises to the membrane. This is an uncharacterized protein from Borreliella burgdorferi (strain ATCC 35210 / DSM 4680 / CIP 102532 / B31) (Borrelia burgdorferi).